The following is a 323-amino-acid chain: MNLEKINELTAQDMAGVNAAILEQLNSDVQLINQLGYYIVSGGGKRIRPMIAVLAARAVGYEGNAHVTIAALIEFIHTATLLHDDVVDESDMRRGKATANAAFGNAASVLVGDFIYTRAFQMMTSLGSLKVLEVMSEAVNVIAEGEVLQLMNVNDPDITEENYMRVIYSKTARLFEAAAQCSGILAGCTPEEEKGLQDYGRYLGTAFQLIDDLLDYNADGEQLGKNVGDDLNEGKPTLPLLHAMHHGTPEQAQMIRTAIEQGNGRHLLEPVLEAMNACGSLEWTRQRAEEEADKAIAALQVLPDTPWREALIGLAHIAVQRDR.

Isopentenyl diphosphate is bound by residues lysine 45, arginine 48, and histidine 77. Residues aspartate 84 and aspartate 88 each contribute to the Mg(2+) site. Arginine 93 contributes to the an all-trans-polyprenyl diphosphate binding site. An isopentenyl diphosphate-binding site is contributed by arginine 94. 3 residues coordinate an all-trans-polyprenyl diphosphate: lysine 170, threonine 171, and glutamine 208.

It belongs to the FPP/GGPP synthase family. Mg(2+) serves as cofactor.

It catalyses the reaction 5 isopentenyl diphosphate + (2E,6E)-farnesyl diphosphate = all-trans-octaprenyl diphosphate + 5 diphosphate. Supplies octaprenyl diphosphate, the precursor for the side chain of the isoprenoid quinones ubiquinone and menaquinone. This is Octaprenyl diphosphate synthase (ispB) from Escherichia coli (strain K12).